We begin with the raw amino-acid sequence, 129 residues long: Large ribosomal subunit protein bL12 (129 aa).

This sequence belongs to the bacterial ribosomal protein bL12 family. Homodimer. Part of the ribosomal stalk of the 50S ribosomal subunit. Forms a multimeric L10(L12)X complex, where L10 forms an elongated spine to which 2 to 4 L12 dimers bind in a sequential fashion. Binds GTP-bound translation factors.

Its function is as follows. Forms part of the ribosomal stalk which helps the ribosome interact with GTP-bound translation factors. Is thus essential for accurate translation. The sequence is that of Large ribosomal subunit protein bL12 from Pseudothermotoga lettingae (strain ATCC BAA-301 / DSM 14385 / NBRC 107922 / TMO) (Thermotoga lettingae).